Reading from the N-terminus, the 310-residue chain is MSNWLEKIIPGMGGAQSKHKSNVPEGLWKKCPKCSAVLYRPELEKNLDVCPKCQHHMRISARRRIDIFLDGADRMEIAPELEPADRLKFKDTKRYKDRLVSNQKATGEKDALVAFKGTVAGVPVVAVAFEFNFLGGSMGAVVGEKFVRAVNVCLEENRALICFSASGGARMQEALISLMQMAKTAAALEVMKQRGLPYISVMTDPVFGGVSASLAMLGDLNVAEPNALIGFAGPRVIEQTVREKLPEGFQRSEFLLEHGALDMILSRNQLRRRLSMLISKMMKLPEPEFENEEELEEEEMERPEPPDNVE.

The CoA carboxyltransferase N-terminal domain maps to 27–296; the sequence is LWKKCPKCSA…PEFENEEELE (270 aa). Zn(2+)-binding residues include Cys-31, Cys-34, Cys-50, and Cys-53. The segment at 31–53 adopts a C4-type zinc-finger fold; that stretch reads CPKCSAVLYRPELEKNLDVCPKC. The interval 285-310 is disordered; it reads PEPEFENEEELEEEEMERPEPPDNVE. The span at 287–310 shows a compositional bias: acidic residues; the sequence is PEFENEEELEEEEMERPEPPDNVE.

Belongs to the AccD/PCCB family. Acetyl-CoA carboxylase is a heterohexamer composed of biotin carboxyl carrier protein (AccB), biotin carboxylase (AccC) and two subunits each of ACCase subunit alpha (AccA) and ACCase subunit beta (AccD). The cofactor is Zn(2+).

Its subcellular location is the cytoplasm. It catalyses the reaction N(6)-carboxybiotinyl-L-lysyl-[protein] + acetyl-CoA = N(6)-biotinyl-L-lysyl-[protein] + malonyl-CoA. It functions in the pathway lipid metabolism; malonyl-CoA biosynthesis; malonyl-CoA from acetyl-CoA: step 1/1. Its function is as follows. Component of the acetyl coenzyme A carboxylase (ACC) complex. Biotin carboxylase (BC) catalyzes the carboxylation of biotin on its carrier protein (BCCP) and then the CO(2) group is transferred by the transcarboxylase to acetyl-CoA to form malonyl-CoA. The polypeptide is Acetyl-coenzyme A carboxylase carboxyl transferase subunit beta (Hahella chejuensis (strain KCTC 2396)).